We begin with the raw amino-acid sequence, 269 residues long: Alcohol dehydrogenase-related 31 kDa protein (269 aa).

11 to 34 (YVADCGGIALETCKVLMTKNIAKL) contributes to the NAD(+) binding site. S139 contacts substrate. The active-site Proton acceptor is Y152.

It belongs to the short-chain dehydrogenases/reductases (SDR) family.

In Drosophila lebanonensis (Fruit fly), this protein is Alcohol dehydrogenase-related 31 kDa protein (Adhr).